The primary structure comprises 423 residues: Adenylosuccinate synthetase (423 aa).

Residues glycine 12–lysine 18 and glycine 40–threonine 42 each bind GTP. The Proton acceptor role is filled by aspartate 13. Residues aspartate 13 and glycine 40 each contribute to the Mg(2+) site. Residues aspartate 13–lysine 16, asparagine 38–histidine 41, threonine 129, arginine 143, glutamine 221, threonine 236, and arginine 300 contribute to the IMP site. Histidine 41 serves as the catalytic Proton donor. Alanine 296 to arginine 302 is a substrate binding site. GTP-binding positions include arginine 302, lysine 328 to aspartate 330, and serine 408 to glycine 410.

Belongs to the adenylosuccinate synthetase family. As to quaternary structure, homodimer. Mg(2+) serves as cofactor.

The protein localises to the cytoplasm. The enzyme catalyses IMP + L-aspartate + GTP = N(6)-(1,2-dicarboxyethyl)-AMP + GDP + phosphate + 2 H(+). It participates in purine metabolism; AMP biosynthesis via de novo pathway; AMP from IMP: step 1/2. Functionally, plays an important role in the de novo pathway of purine nucleotide biosynthesis. Catalyzes the first committed step in the biosynthesis of AMP from IMP. The protein is Adenylosuccinate synthetase of Phocaeicola vulgatus (strain ATCC 8482 / DSM 1447 / JCM 5826 / CCUG 4940 / NBRC 14291 / NCTC 11154) (Bacteroides vulgatus).